We begin with the raw amino-acid sequence, 274 residues long: MTLQETIIKELGVKPSIDPKEEIRRSIDFLKDYLKKHPFLKTYVLGISGGQDSTLAGRLAQLTMEEMRAETGDDSYQFIAIRLPYGVQADESDAQAALAFIQPDVSLTINIKESTDAMVAAVNANGLAMSDFNKGNAKARMRMIAQYAIAGERKGAVIGTDHAAENITGFFTKHGDGGADILPLFRLNKRQGKQLLAALGADEKLYLKVPTADLEEDKPGLADEVALGVTYNQIDDYLEGKTIDPQSQTIIEGWWNKTAHKRHLPITIFDDFWK.

46–53 (GISGGQDS) is an ATP binding site. D52 is a Mg(2+) binding site. R140 lines the deamido-NAD(+) pocket. T160 is a binding site for ATP. Position 165 (E165) interacts with Mg(2+). Residues K173 and D180 each contribute to the deamido-NAD(+) site. Residues K189 and T211 each coordinate ATP. 260–261 (HK) is a deamido-NAD(+) binding site.

This sequence belongs to the NAD synthetase family. As to quaternary structure, homodimer.

It catalyses the reaction deamido-NAD(+) + NH4(+) + ATP = AMP + diphosphate + NAD(+) + H(+). Its pathway is cofactor biosynthesis; NAD(+) biosynthesis; NAD(+) from deamido-NAD(+) (ammonia route): step 1/1. Catalyzes the ATP-dependent amidation of deamido-NAD to form NAD. Uses ammonia as a nitrogen source. In Streptococcus suis (strain 05ZYH33), this protein is NH(3)-dependent NAD(+) synthetase.